Consider the following 352-residue polypeptide: Maleylacetate reductase (352 aa).

The protein belongs to the iron-containing alcohol dehydrogenase family.

It carries out the reaction 3-oxoadipate + NAD(+) = maleylacetate + NADH + H(+). The catalysed reaction is 3-oxoadipate + NADP(+) = maleylacetate + NADPH + H(+). Its pathway is aromatic compound metabolism; 3-chlorocatechol degradation. The polypeptide is Maleylacetate reductase (clcE) (Pseudomonas aeruginosa).